Reading from the N-terminus, the 344-residue chain is CRISPR-associated endonuclease Cas1 2 (344 aa).

The Mn(2+) site is built by Glu-167, His-235, and Glu-250.

It belongs to the CRISPR-associated endonuclease Cas1 family. Homodimer, forms a heterotetramer with a Cas2 homodimer. It depends on Mg(2+) as a cofactor. Mn(2+) serves as cofactor.

Functionally, CRISPR (clustered regularly interspaced short palindromic repeat), is an adaptive immune system that provides protection against mobile genetic elements (viruses, transposable elements and conjugative plasmids). CRISPR clusters contain spacers, sequences complementary to antecedent mobile elements, and target invading nucleic acids. CRISPR clusters are transcribed and processed into CRISPR RNA (crRNA). Acts as a dsDNA endonuclease. Involved in the integration of spacer DNA into the CRISPR cassette. This chain is CRISPR-associated endonuclease Cas1 2, found in Rhodospirillum rubrum (strain ATCC 11170 / ATH 1.1.1 / DSM 467 / LMG 4362 / NCIMB 8255 / S1).